Reading from the N-terminus, the 249-residue chain is Triosephosphate isomerase (249 aa).

Residues asparagine 12 and lysine 14 each coordinate substrate. Lysine 14 carries the post-translational modification N6-acetyllysine. Position 68 is a 3'-nitrotyrosine (tyrosine 68). Phosphoserine is present on serine 80. Histidine 96 (electrophile) is an active-site residue. Serine 106 carries the post-translational modification Phosphoserine. A Glycyl lysine isopeptide (Lys-Gly) (interchain with G-Cter in SUMO1) cross-link involves residue lysine 142. Lysine 149 is modified (N6-succinyllysine). At lysine 156 the chain carries N6-acetyllysine; alternate. At lysine 156 the chain carries N6-succinyllysine; alternate. The residue at position 159 (serine 159) is a Phosphoserine. Residue glutamate 166 is the Proton acceptor of the active site. A Phosphothreonine modification is found at threonine 173. The residue at position 194 (lysine 194) is an N6-acetyllysine; alternate. Lysine 194 carries the N6-succinyllysine; alternate modification. Lysine 194 bears the N6-methyllysine; alternate mark. Serine 198 is subject to Phosphoserine. Tyrosine 209 is modified (3'-nitrotyrosine). Serine 212 is modified (phosphoserine). Threonine 214 is modified (phosphothreonine). At serine 223 the chain carries Phosphoserine. An N6-acetyllysine modification is found at lysine 238.

Belongs to the triosephosphate isomerase family. In terms of assembly, homodimer.

It is found in the cytoplasm. It catalyses the reaction dihydroxyacetone phosphate = methylglyoxal + phosphate. The catalysed reaction is D-glyceraldehyde 3-phosphate = dihydroxyacetone phosphate. It functions in the pathway carbohydrate degradation; glycolysis; D-glyceraldehyde 3-phosphate from glycerone phosphate: step 1/1. Its pathway is carbohydrate biosynthesis; gluconeogenesis. Functionally, triosephosphate isomerase is an extremely efficient metabolic enzyme that catalyzes the interconversion between dihydroxyacetone phosphate (DHAP) and D-glyceraldehyde-3-phosphate (G3P) in glycolysis and gluconeogenesis. It is also responsible for the non-negligible production of methylglyoxal a reactive cytotoxic side-product that modifies and can alter proteins, DNA and lipids. This Bos taurus (Bovine) protein is Triosephosphate isomerase (TPI1).